Consider the following 210-residue polypeptide: Amelogenin, X isoform (210 aa).

The N-terminal stretch at 1–16 (MGTWILFACLLGAAFA) is a signal peptide. The residue at position 32 (serine 32) is a Phosphoserine. 2 stretches are compositionally biased toward low complexity: residues 109–119 (VAPQQPMMPVP) and 136–169 (PSAQ…HPMQ). The disordered stretch occupies residues 109 to 187 (VAPQQPMMPV…PPLFSMQPLS (79 aa)). Positions 170 to 179 (PLAPQPPLPP) are enriched in pro residues.

This sequence belongs to the amelogenin family. Interacts with KRT5. In terms of processing, several forms are produced by C-terminal processing. Phosphorylated by FAM20C in vitro.

It is found in the secreted. It localises to the extracellular space. The protein localises to the extracellular matrix. Functionally, plays a role in the biomineralization of teeth. Seems to regulate the formation of crystallites during the secretory stage of tooth enamel development. Thought to play a major role in the structural organization and mineralization of developing enamel. This chain is Amelogenin, X isoform (Amelx), found in Mus musculus (Mouse).